A 217-amino-acid polypeptide reads, in one-letter code: MSKSRAEAAAGAPGIVLRYLQEQNRPYSAQDVFGNLQKEHGLGKAAVVKALDQLAQQGKIKEKTYGKQKIYFADQDQFDTVSDADLHSLDASIMALTAKVQGLQQSCRHMEAELKELTSALTTPEMQTEIQELKKECARYTERLKNIKAATNHVTPEEKEKVYRERQKYCKEWRKRKRMTTELCDAILEGYPKSKKQFFEEVGIETDEDHNVTLPNP.

An interaction with NR3C1, homodimerization and transcriptional activation almost abolished when missing region spans residues 89–117 (LDASIMALTAKVQGLQQSCRHMEAELKEL). Positions 93-153 (IMALTAKVQG…LKNIKAATNH (61 aa)) form a coiled coil. The segment at 118 to 182 (TSALTTPEMQ…WRKRKRMTTE (65 aa)) is DNA-binding. Positions 118 to 182 (TSALTTPEMQ…WRKRKRMTTE (65 aa)) are interaction with NR3C1 decreased when missing.

This sequence belongs to the HOP2 family. In terms of assembly, forms a stable heterodimer with MND1. Interacts with PSMC3/TBP1. Interacts with the DNA-binding domain of the nuclear receptors NR3C1/GR, ESR2/ER-beta, THRB and RXRA. Post-translationally, phosphorylated by PKA, PKC and MAPK.

Its subcellular location is the nucleus. Plays an important role in meiotic recombination. Stimulates DMC1-mediated strand exchange required for pairing homologous chromosomes during meiosis. The complex PSMC3IP/MND1 binds DNA, stimulates the recombinase activity of DMC1 as well as DMC1 D-loop formation from double-strand DNA. This complex stabilizes presynaptic RAD51 and DMC1 filaments formed on single strand DNA to capture double-strand DNA. This complex stimulates both synaptic and presynaptic critical steps in RAD51 and DMC1-promoted homologous pairing. May inhibit HIV-1 viral protein TAT activity and modulate the activity of proteasomes through association with PSMC3. Plays a role as a coactivator in nuclear receptor-mediated transcription. The polypeptide is Homologous-pairing protein 2 homolog (Psmc3ip) (Rattus norvegicus (Rat)).